The primary structure comprises 530 residues: Light-harvesting complex I LH38 proteins (530 aa).

The protein resides in the plastid. It is found in the chloroplast. This chain is Light-harvesting complex I LH38 proteins, found in Euglena gracilis.